We begin with the raw amino-acid sequence, 404 residues long: L-cysteine:1D-myo-inositol 2-amino-2-deoxy-alpha-D-glucopyranoside ligase 1 (404 aa).

Cys47 is a Zn(2+) binding site. Residues 47-50 (CGIT), Thr62, and 85-87 (NIT) contribute to the L-cysteinyl-5'-AMP site. The 'HIGH' region motif lies at 49 to 59 (ITPYDSTHLGH). Positions 188-193 (ERGGDP) match the 'ERGGDP' region motif. Trp228 is an L-cysteinyl-5'-AMP binding site. Cys232 lines the Zn(2+) pocket. 250-252 (GSD) provides a ligand contact to L-cysteinyl-5'-AMP. His257 provides a ligand contact to Zn(2+). Ile284 serves as a coordination point for L-cysteinyl-5'-AMP. Positions 290–294 (KMSKS) match the 'KMSKS' region motif.

Belongs to the class-I aminoacyl-tRNA synthetase family. MshC subfamily. Monomer. The cofactor is Zn(2+).

It carries out the reaction 1D-myo-inositol 2-amino-2-deoxy-alpha-D-glucopyranoside + L-cysteine + ATP = 1D-myo-inositol 2-(L-cysteinylamino)-2-deoxy-alpha-D-glucopyranoside + AMP + diphosphate + H(+). Catalyzes the ATP-dependent condensation of GlcN-Ins and L-cysteine to form L-Cys-GlcN-Ins. The protein is L-cysteine:1D-myo-inositol 2-amino-2-deoxy-alpha-D-glucopyranoside ligase 1 of Corynebacterium jeikeium (strain K411).